A 247-amino-acid chain; its full sequence is Orotidine 5'-phosphate decarboxylase (247 aa).

Substrate contacts are provided by residues aspartate 22, lysine 44, 71 to 80, threonine 131, arginine 192, glutamine 201, glycine 221, and arginine 222; that span reads DLKFHDIPNT. Residue lysine 73 is the Proton donor of the active site.

Belongs to the OMP decarboxylase family. Type 1 subfamily. In terms of assembly, homodimer.

The enzyme catalyses orotidine 5'-phosphate + H(+) = UMP + CO2. Its pathway is pyrimidine metabolism; UMP biosynthesis via de novo pathway; UMP from orotate: step 2/2. Its function is as follows. Catalyzes the decarboxylation of orotidine 5'-monophosphate (OMP) to uridine 5'-monophosphate (UMP). The protein is Orotidine 5'-phosphate decarboxylase of Pectobacterium carotovorum subsp. carotovorum (strain PC1).